The primary structure comprises 356 residues: Cyclin-D4-1 (356 aa).

The protein belongs to the cyclin family. Cyclin D subfamily.

The protein is Cyclin-D4-1 (CYCD4-1) of Oryza sativa subsp. japonica (Rice).